The following is a 283-amino-acid chain: Elongation factor Ts (283 aa).

Residues 79 to 82 (TDFV) form an involved in Mg(2+) ion dislocation from EF-Tu region.

This sequence belongs to the EF-Ts family.

It localises to the cytoplasm. In terms of biological role, associates with the EF-Tu.GDP complex and induces the exchange of GDP to GTP. It remains bound to the aminoacyl-tRNA.EF-Tu.GTP complex up to the GTP hydrolysis stage on the ribosome. This Pseudoalteromonas translucida (strain TAC 125) protein is Elongation factor Ts.